We begin with the raw amino-acid sequence, 447 residues long: Membrane metalloprotease ARASP, chloroplastic (447 aa).

Residues 1–73 constitute a chloroplast transit peptide; that stretch reads MLLNISSSPI…YPDGERFDFR (73 aa). A Zn(2+)-binding site is contributed by histidine 102. The active site involves glutamate 103. Histidine 106 is a binding site for Zn(2+). A helical membrane pass occupies residues 177 to 197; sequence SIVVSAGIIANVIFAYAIIFV. One can recognise a PDZ domain in the interval 202–244; sequence VGLPVQEAFPGVLVPEVKTFSAASRDGLLSGDVILAVDGTELS. 2 helical membrane-spanning segments follow: residues 379-399 and 413-433; these read LAVI…ALIL and VEQG…LFLI.

The protein belongs to the peptidase M50A family. It depends on Zn(2+) as a cofactor. Expressed in green seedlings and cotyledons. Low levels of expression in roots, siliques and seeds.

The protein localises to the plastid. It localises to the chloroplast inner membrane. Functionally, metalloprotease essential for chloroplast and plant development. May be involved in regulated intramembrane proteolysis (RIP). In Arabidopsis thaliana (Mouse-ear cress), this protein is Membrane metalloprotease ARASP, chloroplastic.